Consider the following 272-residue polypeptide: MKRRQRLTARSRLRAGIRCHNRFYNAMVQDLASAKRNGVYGERLAPLFSELVPAETLKTALGVSLAFEVNLGQRRPDCVCTVQFGKGSDAKGVCILIELKTCRFSKNMNTASKNLQRKGGMRQLHDSCRLLARTLPPGSGEIVLAPVLVFVAQRGMRVLRVTRLSPQVVYSNAAVLSCTISRLAEYAPPVSAKSTRRRCVAKGTKAKAFSTKAAAEPVPSITPAQPSAAAAVVSLFPAAVPANTTNAAAVHQPVAVSHVNPLAWVASLFSPK.

Belongs to the herpesviridae UL24 family.

The protein localises to the virion. It localises to the host cytoplasm. Its subcellular location is the host nucleus. It is found in the host nucleolus. The protein resides in the host Golgi apparatus. In terms of biological role, may participate in nuclear egress of viral particles. Plays a role in the dispersal of several host nucleolar proteins including NCL/nucleolin and NPM1. Since deletion of host NCL/nucleolin negatively impact on nuclear egress, UL24 supposedly acts on this process through its effect on host nucleoli. This chain is Protein UL24 homolog, found in Equine herpesvirus 1 (strain V592) (EHV-1).